We begin with the raw amino-acid sequence, 103 residues long: PTS system oligo-beta-mannoside-specific EIIB component (103 aa).

Residues 1 to 103 (MKKILLACSS…EQALSLMVNQ (103 aa)) enclose the PTS EIIB type-3 domain. Cys-8 (phosphocysteine intermediate) is an active-site residue. Cys-8 is subject to Phosphocysteine; by EIIA.

It is found in the cytoplasm. It catalyses the reaction D-cellobiose(out) + N(pros)-phospho-L-histidyl-[protein] = 6-phospho-beta-D-glucosyl-(1-&gt;4)-D-glucose(in) + L-histidyl-[protein]. Its function is as follows. The phosphoenolpyruvate-dependent sugar phosphotransferase system (sugar PTS), a major carbohydrate active transport system, catalyzes the phosphorylation of incoming sugar substrates concomitantly with their translocation across the cell membrane. The enzyme II GmuABC PTS system is involved in the transport of oligo-glucomannans such as cellobiose or mannobiose. The protein is PTS system oligo-beta-mannoside-specific EIIB component of Bacillus subtilis (strain 168).